We begin with the raw amino-acid sequence, 208 residues long: MFDVTRYATAAQSIVEAGRFLYERGWSPATSSNYSARIDGDHVAITVSGRHKGQLGAGDVMVVDLHGQAVQSDCRSSAETLLHTVIYQLYPEVGAVLHTHSVKATVLSRLIPAGQALELEGYELQKAFNGVQTHEGKLIVPVFDNTQDIPALAEETRDWFARHPEQPGYLIRGHGLYTWGRTMADCLRHIEAFEFLFECELETMRVRR.

Zn(2+) contacts are provided by His-98 and His-100.

It belongs to the aldolase class II family. MtnB subfamily. The cofactor is Zn(2+).

It catalyses the reaction 5-(methylsulfanyl)-D-ribulose 1-phosphate = 5-methylsulfanyl-2,3-dioxopentyl phosphate + H2O. The protein operates within amino-acid biosynthesis; L-methionine biosynthesis via salvage pathway; L-methionine from S-methyl-5-thio-alpha-D-ribose 1-phosphate: step 2/6. In terms of biological role, catalyzes the dehydration of methylthioribulose-1-phosphate (MTRu-1-P) into 2,3-diketo-5-methylthiopentyl-1-phosphate (DK-MTP-1-P). This chain is Methylthioribulose-1-phosphate dehydratase, found in Marinobacter nauticus (strain ATCC 700491 / DSM 11845 / VT8) (Marinobacter aquaeolei).